Consider the following 112-residue polypeptide: Conotoxin vil14.5 (112 aa).

Residues 1 to 22 form the signal peptide; it reads MGFRVLVLVVMATTSALPFTFS. The propeptide occupies 23 to 85; sequence EEPGRSPFRP…FAELSVGQRR (63 aa). Residues 53–74 form a disordered region; the sequence is RADGQPPDMRQPEMRRPEVRQP. Residues 62-74 are compositionally biased toward basic and acidic residues; sequence RQPEMRRPEVRQP. Intrachain disulfides connect cysteine 91–cysteine 111 and cysteine 95–cysteine 107.

Belongs to the conotoxin R superfamily. Expressed by the venom duct.

It localises to the secreted. The sequence is that of Conotoxin vil14.5 from Conus villepinii (Villepin's cone).